Consider the following 387-residue polypeptide: Lactosylceramide alpha-2,3-sialyltransferase (387 aa).

The Cytoplasmic segment spans residues 1–33 (MPNEFTSAKLRSDCSRTSLQWYTQTQHKMRRPS). Residues 34 to 54 (LLLKDILKCMLVVFGVWLLYI) traverse the membrane as a helical; Signal-anchor for type II membrane protein segment. Residues 55–387 (LKLNYTAEEC…VVQDLSGGIH (333 aa)) lie on the Extracellular side of the membrane. Asn58 and Asn208 each carry an N-linked (GlcNAc...) asparagine glycan. A disulfide bridge links Cys167 with Cys325.

Belongs to the glycosyltransferase 29 family.

It is found in the golgi apparatus membrane. The enzyme catalyses a beta-D-Gal-(1-&gt;4)-beta-D-Glc-(1&lt;-&gt;1)-Cer(d18:1(4E)) + CMP-N-acetyl-beta-neuraminate = a ganglioside GM3 (d18:1(4E)) + CMP + H(+). It catalyses the reaction ganglioside GA2 (d18:1(4E)/18:0) + CMP-N-acetyl-beta-neuraminate = ganglioside GM2 (d18:1(4E)/18:0) + CMP + H(+). It carries out the reaction a beta-D-Gal-(1&lt;-&gt;1')-ceramide + CMP-N-acetyl-beta-neuraminate = N-acetyl-alpha-neuraminosyl-(2-&gt;3)-beta-D-galactosyl-(1&lt;-&gt;1')-ceramide + CMP + H(+). The catalysed reaction is ganglioside GA1 (d18:1(4E)/18:0) + CMP-N-acetyl-beta-neuraminate = ganglioside GM1 (d18:1(4E)/18:0) + CMP + H(+). Transfers the sialyl group (N-acetyl-alpha-neuraminyl or NeuAc) from CMP-NeuAc to the non-reducing terminal galactose (Gal) of glycosphingolipids forming gangliosides (important molecules involved in the regulation of multiple cellular processes, including cell proliferation and differentiation, apoptosis, embryogenesis, development, and oncogenesis). Mainly involved in the biosynthesis of ganglioside GM3 but can also use different glycolipids as substrate acceptors such as D-galactosylceramide (GalCer), asialo-GM2 (GA2) and asialo-GM1 (GA1), although less preferentially than beta-D-Gal-(1-&gt;4)-beta-D-Glc-(1&lt;-&gt;1)-Cer (LacCer). The sequence is that of Lactosylceramide alpha-2,3-sialyltransferase (St3gal5) from Rattus norvegicus (Rat).